The following is a 1117-amino-acid chain: Sodium-driven chloride bicarbonate exchanger (1117 aa).

Disordered regions lie at residues 1 to 23 (MEIK…EEAV) and 58 to 97 (GRKS…TPSQ). Residues 1–508 (MEIKDQGAQM…DFRDAFSLQC (508 aa)) are Cytoplasmic-facing. Basic residues predominate over residues 59-76 (RKSHRRHRHRGHKHRKRD). A Phosphoserine modification is found at serine 89. Threonine 94 is subject to Phosphothreonine. The residue at position 275 (serine 275) is a Phosphoserine. 2 disordered regions span residues 282-309 (DFSK…KGPP) and 431-476 (WDPS…PELQ). A helical transmembrane segment spans residues 509–529 (LASFLFLYCACMSPVITFGGL). The Extracellular segment spans residues 530-537 (LGEATEGR). Residues 538–558 (ISAIESLFGASMTGIAYSLFG) traverse the membrane as a helical segment. Residues 559–561 (GQP) are Cytoplasmic-facing. A helical transmembrane segment spans residues 562 to 582 (LTILGSTGPVLVFEKILFKFC). Over 583–595 (KEYGLSYLSLRAS) the chain is Extracellular. A helical membrane pass occupies residues 596 to 616 (IGLWTATLCIILVATDASSLV). The Cytoplasmic segment spans residues 617 to 625 (CYITRFTEE). A helical transmembrane segment spans residues 626 to 646 (AFASLICIIFIYEALEKLFEL). Residues 647 to 719 (SESYPINMHN…VGRACGHGHP (73 aa)) lie on the Extracellular side of the membrane. 3 N-linked (GlcNAc...) asparagine glycosylation sites follow: asparagine 676, asparagine 686, and asparagine 696. The helical transmembrane segment at 720-740 (YVPDVLFWSVILFFSTVTMSA) threads the bilayer. Over 741–761 (TLKQFKTSRYFPTKVRSIVSD) the chain is Cytoplasmic. A helical membrane pass occupies residues 762–782 (FAVFLTILCMVLIDYAIGIPS). Residues 783-808 (PKLQVPSVFKPTRDDRGWFVTPLGPN) lie on the Extracellular side of the membrane. Residues 809-829 (PWWTIIAAIIPALLCTILIFM) form a helical membrane-spanning segment. Residues 830-854 (DQQITAVIINRKEHKLKKGCGYHLD) lie on the Cytoplasmic side of the membrane. The chain crosses the membrane as a helical span at residues 855–875 (LLMVAVMLGVCSIMGLPWFVA). The Extracellular segment spans residues 876–911 (ATVLSITHVNSLKLESECSAPGEQPKFLGIREQRVT). A helical transmembrane segment spans residues 912–932 (GLMIFILMGSSVFMTSILKFI). Residues 933–934 (PM) are Cytoplasmic-facing. The helical transmembrane segment at 935 to 955 (PVLYGVFLYMGASSLKGIQLF) threads the bilayer. The Extracellular segment spans residues 956–997 (DRIKLFWMPAKHQPDFIYLRHVPLRKVHLFTVIQMSCLGLLW). The chain crosses the membrane as a helical span at residues 998–1018 (IIKVSRAAIVFPMMVLALVFV). Topologically, residues 1019 to 1117 (RKLMDFLFTK…SRFPSKSSPS (99 aa)) are cytoplasmic. 2 positions are modified to phosphoserine: serine 1056 and serine 1084.

It belongs to the anion exchanger (TC 2.A.31) family. Post-translationally, N-glycosylated. As to expression, in the brain, detected in cerebral cortex, subcortex, cerebellum, hippocampus and medulla (at protein level). Expressed in neurons but not in astrocytes (at protein level). Isoforms starting with Met-Glu-Ile-Lys are found predominantly in the brain with lower levels in the eye while isoforms starting with Met-Cys-Asp-Leu are most abundant in the kidney with lower levels in the duodenum, jejunum and ileum (at protein level). In the kidney, isoforms starting with Met-Cys-Asp-Leu are primarily expressed in the cortex, the outer stripe of the outer medulla and the inner stripe of the outer medulla (ISOM) but are not detectable in the inner medulla (IM) while isoforms starting with Met-Glu-Ile-Lys are predominantly expressed in the ISOM and IM. Expressed in the brain, in the hippocampus as well as in dentate gyrus, cortical layers, cerebellum, olfactory bulb and in the epithelial cells of the choroid plexus. Detected in pituitary, testis, kidney and ileum. Detected also in spleen and lung. In terms of tissue distribution, mainly expressed in the jejenum (at protein level).

Its subcellular location is the basolateral cell membrane. It localises to the apical cell membrane. The protein localises to the cell projection. The protein resides in the dendrite. It is found in the axon. Its subcellular location is the perikaryon. It localises to the presynapse. The protein localises to the postsynapse. It carries out the reaction 2 hydrogencarbonate(out) + chloride(in) + Na(+)(out) = 2 hydrogencarbonate(in) + chloride(out) + Na(+)(in). Its function is as follows. Sodium/bicarbonate cotransporter which plays an important role in regulating intracellular pH. Has been shown to act as a sodium/bicarbonate cotransporter in exchange for intracellular chloride. Has also been shown to act as a sodium/biocarbonate cotransporter which does not couple net influx of bicarbonate to net efflux of chloride, with the observed chloride efflux being due to chloride self-exchange. Controls neuronal pH and may contribute to the secretion of cerebrospinal fluid. Acting on presynaptic intracellular pH, it promotes GABA release, reduces the excitability of CA1 pyramidal neurons, and modulates short-term synaptic plasticity. Required in retinal cells to maintain normal pH which is necessary for normal vision. In the kidney, likely to mediate bicarbonate reclamation in the apical membrane of the proximal tubules. Sodium/bicarbonate cotransporter which mediates cotransport of sodium and bicarbonate in association with an efflux of intracellular chloride and is involved in NaCl absorption in the small intestine. This chain is Sodium-driven chloride bicarbonate exchanger, found in Rattus norvegicus (Rat).